Consider the following 104-residue polypeptide: Large ribosomal subunit protein uL24 (104 aa).

The protein belongs to the universal ribosomal protein uL24 family. In terms of assembly, part of the 50S ribosomal subunit.

One of two assembly initiator proteins, it binds directly to the 5'-end of the 23S rRNA, where it nucleates assembly of the 50S subunit. Its function is as follows. One of the proteins that surrounds the polypeptide exit tunnel on the outside of the subunit. This chain is Large ribosomal subunit protein uL24, found in Methylorubrum populi (strain ATCC BAA-705 / NCIMB 13946 / BJ001) (Methylobacterium populi).